Here is a 411-residue protein sequence, read N- to C-terminus: Putative glycosyltransferase SCO3672 (411 aa).

Transmembrane regions (helical) follow at residues 7–27 (IAAA…LAAL), 45–65 (PVPL…AWAG), 70–90 (VVPL…VGAL), 120–140 (ETGP…TGAF), 148–168 (GVVG…AAVE), 169–189 (LMDG…GFLL), 197–217 (IALG…AAVL), 227–247 (GAGV…LVLL), 277–297 (GVVV…VLAH), and 301–321 (VGGQ…LGLL).

This sequence belongs to the glycosyltransferase 4 family.

The protein resides in the cell membrane. The protein is Putative glycosyltransferase SCO3672 of Streptomyces coelicolor (strain ATCC BAA-471 / A3(2) / M145).